Reading from the N-terminus, the 115-residue chain is U3-lycotoxin-Ls1o (115 aa).

Positions 1 to 20 are cleaved as a signal peptide; it reads MKFVLLFGVLLVTLFSYSSA. Residues 21–44 constitute a propeptide that is removed on maturation; sequence EMLDDFDQADEDELLSLIEKEEAR. 4 disulfide bridges follow: Cys-48/Cys-63, Cys-55/Cys-72, Cys-62/Cys-87, and Cys-74/Cys-85.

The protein belongs to the neurotoxin 19 (CSTX) family. 01 subfamily. As to expression, expressed by the venom gland.

Its subcellular location is the secreted. The sequence is that of U3-lycotoxin-Ls1o from Lycosa singoriensis (Wolf spider).